Reading from the N-terminus, the 147-residue chain is Arginine vasopressin-induced protein 1 (147 aa).

Disordered stretches follow at residues 1-24 (MGTP…RGRK) and 104-147 (LANP…QIRH). A compositionally biased stretch (polar residues) spans 105–119 (ANPQSATETASSEQY). A compositionally biased stretch (basic residues) spans 121-134 (HSRKKSARIRRNWR). A compositionally biased stretch (polar residues) spans 137-147 (GPTSYLHQIRH).

May be involved in MAP kinase activation, epithelial sodium channel (ENaC) down-regulation and cell cycling. This chain is Arginine vasopressin-induced protein 1 (AVPI1), found in Homo sapiens (Human).